Here is a 333-residue protein sequence, read N- to C-terminus: Tetraacyldisaccharide 4'-kinase (333 aa).

60-67 (TVGGTGKT) contacts ATP.

The protein belongs to the LpxK family.

It carries out the reaction a lipid A disaccharide + ATP = a lipid IVA + ADP + H(+). The protein operates within glycolipid biosynthesis; lipid IV(A) biosynthesis; lipid IV(A) from (3R)-3-hydroxytetradecanoyl-[acyl-carrier-protein] and UDP-N-acetyl-alpha-D-glucosamine: step 6/6. Functionally, transfers the gamma-phosphate of ATP to the 4'-position of a tetraacyldisaccharide 1-phosphate intermediate (termed DS-1-P) to form tetraacyldisaccharide 1,4'-bis-phosphate (lipid IVA). This chain is Tetraacyldisaccharide 4'-kinase, found in Ectopseudomonas mendocina (strain ymp) (Pseudomonas mendocina).